A 416-amino-acid chain; its full sequence is 2,3-bisphosphoglycerate-independent phosphoglycerate mutase (416 aa).

It belongs to the BPG-independent phosphoglycerate mutase family. A-PGAM subfamily.

The enzyme catalyses (2R)-2-phosphoglycerate = (2R)-3-phosphoglycerate. The protein operates within carbohydrate degradation; glycolysis; pyruvate from D-glyceraldehyde 3-phosphate: step 3/5. Functionally, catalyzes the interconversion of 2-phosphoglycerate and 3-phosphoglycerate. The sequence is that of 2,3-bisphosphoglycerate-independent phosphoglycerate mutase from Ignicoccus hospitalis (strain KIN4/I / DSM 18386 / JCM 14125).